A 267-amino-acid polypeptide reads, in one-letter code: Putative [LysW]-aminoadipate/[LysW]-glutamate kinase (267 aa).

Substrate-binding positions include 37-38 (GG), R64, and N169.

Belongs to the acetylglutamate kinase family. LysZ subfamily.

It is found in the cytoplasm. It carries out the reaction [amino-group carrier protein]-C-terminal-N-(1,4-dicarboxybutan-1-yl)-L-glutamine + ATP = [amino-group carrier protein]-C-terminal-N-(1-carboxy-5-phosphooxy-5-oxopentan-1-yl)-L-glutamine + ADP. It catalyses the reaction [amino-group carrier protein]-C-terminal-gamma-(L-glutamyl)-L-glutamate + ATP = [amino-group carrier protein]-C-terminal-gamma-(5-phospho-L-glutamyl)-L-glutamate + ADP. It functions in the pathway amino-acid biosynthesis; L-lysine biosynthesis via AAA pathway; L-lysine from L-alpha-aminoadipate (Thermus route): step 2/5. Its pathway is amino-acid biosynthesis; L-arginine biosynthesis. Its function is as follows. Involved in both the arginine and lysine biosynthetic pathways. Phosphorylates the LysW-bound precursors glutamate (for arginine biosynthesis), respectively alpha-aminoadipate (for lysine biosynthesis). The protein is Putative [LysW]-aminoadipate/[LysW]-glutamate kinase of Nitrosopumilus maritimus (strain SCM1).